Here is a 399-residue protein sequence, read N- to C-terminus: ATP-dependent RNA helicase fal1 (399 aa).

Residues 25–53 carry the Q motif motif; sequence PTFEDMHLKESLLRGIYAYGYESPSAVQS. The Helicase ATP-binding domain occupies 56 to 226; that stretch reads IVQICKGRDT…TKFMTDPVRV (171 aa). Residue 69–76 participates in ATP binding; the sequence is AQSGTGKT. The DEAD box signature appears at 174–177; that stretch reads DEAD. The region spanning 237-398 is the Helicase C-terminal domain; sequence GIKQYFIAVE…EMPMNVADLL (162 aa).

It belongs to the DEAD box helicase family. DDX48/FAL1 subfamily.

It is found in the nucleus. Its subcellular location is the nucleolus. The catalysed reaction is ATP + H2O = ADP + phosphate + H(+). Its function is as follows. ATP-dependent RNA helicase involved in 40S ribosomal subunit biogenesis. Required for the processing and cleavage of 35S pre-rRNA at sites A0, A1, and A2, leading to mature 18S rRNA. This is ATP-dependent RNA helicase fal1 (fal1) from Aspergillus clavatus (strain ATCC 1007 / CBS 513.65 / DSM 816 / NCTC 3887 / NRRL 1 / QM 1276 / 107).